The following is a 212-amino-acid chain: Ribonuclease HII (212 aa).

In terms of domain architecture, RNase H type-2 spans 12-201; the sequence is ELVAGVDEVG…VRAMLEQVSI (190 aa). A divalent metal cation is bound by residues Asp18, Glu19, and Asp110.

Belongs to the RNase HII family. Mn(2+) serves as cofactor. It depends on Mg(2+) as a cofactor.

The protein resides in the cytoplasm. It catalyses the reaction Endonucleolytic cleavage to 5'-phosphomonoester.. Its function is as follows. Endonuclease that specifically degrades the RNA of RNA-DNA hybrids. The protein is Ribonuclease HII of Stutzerimonas stutzeri (strain A1501) (Pseudomonas stutzeri).